We begin with the raw amino-acid sequence, 187 residues long: Large ribosomal subunit protein uL24c (187 aa).

The transit peptide at 1-41 (MAALQSSFAGLSTSFFGQRFSPPLSLPPLVKSTEGPCLIQA) directs the protein to the chloroplast.

This sequence belongs to the universal ribosomal protein uL24 family. In terms of assembly, part of the 50S ribosomal subunit.

It localises to the plastid. Its subcellular location is the chloroplast. In terms of biological role, one of two assembly initiator proteins, it binds directly to the 5'-end of the 23S rRNA, where it nucleates assembly of the 50S subunit. The chain is Large ribosomal subunit protein uL24c (RPL24) from Nicotiana tabacum (Common tobacco).